Here is a 525-residue protein sequence, read N- to C-terminus: GMP synthase [glutamine-hydrolyzing] (525 aa).

In terms of domain architecture, Glutamine amidotransferase type-1 spans 8–207 (KILILDFGSQ…ALDICGCAAN (200 aa)). Residue cysteine 85 is the Nucleophile of the active site. Catalysis depends on residues histidine 181 and glutamate 183. The GMPS ATP-PPase domain maps to 208–400 (WKPSSIIEDA…LGLPYNMLYR (193 aa)). ATP is bound at residue 235 to 241 (SGGVDSS).

As to quaternary structure, homodimer.

It catalyses the reaction XMP + L-glutamine + ATP + H2O = GMP + L-glutamate + AMP + diphosphate + 2 H(+). The protein operates within purine metabolism; GMP biosynthesis; GMP from XMP (L-Gln route): step 1/1. Its function is as follows. Catalyzes the synthesis of GMP from XMP. This Shewanella baltica (strain OS155 / ATCC BAA-1091) protein is GMP synthase [glutamine-hydrolyzing].